We begin with the raw amino-acid sequence, 378 residues long: Prolargin (378 aa).

Residues 1–21 (MRASFFWLLPLLLILASVAQG) form the signal peptide. The tract at residues 22 to 62 (QPTRPKPGIRRKPKPRPTPRFPQAPEPAEPTDLPPPLPPGP) is disordered. A compositionally biased stretch (basic residues) spans 28–38 (PGIRRKPKPRP). The segment covering 39–62 (TPRFPQAPEPAEPTDLPPPLPPGP) has biased composition (pro residues). LRR repeat units lie at residues 91–110 (RRVP…NNFI), 111–134 (TELP…NNRI), 135–158 (RKVD…KNQL), 159–179 (EEVP…QNLI), 180–203 (SRIP…HNRL), 204–229 (SDGV…HNIL), 230–250 (RKMP…SNKI), 251–274 (ETIP…YNKL), 275–299 (SDRG…HNKI), 300–319 (SNVP…NNSI), 320–358 (EKIN…GNFL), and 359–378 (KPPI…SVVI). N-linked (GlcNAc...) asparagine glycosylation is present at Asn120. Residues Asn285, Asn316, and Asn323 are each glycosylated (N-linked (GlcNAc...) asparagine). Cys328 and Cys369 are disulfide-bonded.

The protein belongs to the small leucine-rich proteoglycan (SLRP) family. SLRP class II subfamily. Binds the basement membrane heparan sulfate proteoglycan perlecan and triple helical collagens type I and type II. Post-translationally, glycosylated; contains heparan sulfate. In terms of tissue distribution, expressed in cartilage throughout both fetal development and postnatal life. It is also expressed in the developing embryo prior to skeletogenesis. In adult, highest expression in lung, lower levels in cardiac and skeletal muscle.

Its subcellular location is the secreted. It is found in the extracellular space. The protein resides in the extracellular matrix. Its function is as follows. May anchor basement membranes to the underlying connective tissue. This Mus musculus (Mouse) protein is Prolargin (Prelp).